A 1164-amino-acid polypeptide reads, in one-letter code: Receptor-like protein kinase BRI1-like 3 (1164 aa).

A signal peptide spans 1-23; that stretch reads MKQQWQFLILCLLVLFLTVDSRG. Topologically, residues 24–772 are extracellular; sequence RRLLSDDVND…RSHAHPKKQS (749 aa). A glycan (N-linked (GlcNAc...) asparagine) is linked at Asn-32. The short motif at 65–72 is the Cys pair 1 element; sequence CTWRGVSC. LRR repeat units follow at residues 77-98, 102-123, 125-146, 151-173, 176-197, 202-224, 227-248, 252-274, 278-300, 303-325, 327-347, 352-375, 376-397, 403-424, 427-448, 451-473, 476-498, 500-523, 524-546, and 548-570; these read RVIGLDLRNGGLTGTLNLNNLT, NLRSLYLQGNNFSSGDSSSSSG, SLEVLDLSSNSLTDSSIVDYVF, NLVSVNFSHNKLAGKLKSSPSAS, RITTVDLSNNRFSDEIPETFIA, SLKHLDLSGNNVTGDFSRLSFGL, NLTVFSLSQNSISGDRFPVSLS, LLETLNLSRNSLIGKIPGDDYWG, NLRQLSLAHNLYSGEIPPELSLL, TLEVLDLSGNSLTGQLPQSFTSC, SLQSLNLGNNKLSGDFLSTVV, RITNLYLPFNNISGSVPISLTNCS, NLRVLDLSSNEFTGEVPSGFCS, VLEKLLIANNYLSGTVPVELGK, SLKTIDLSFNALTGLIPKEIWT, KLSDLVMWANNLTGGIPESICVD, NLETLILNNNLLTGSLPESISKC, NMLWISLSSNLLTGEIPVGIGKLE, KLAILQLGNNSLTGNIPSELGNC, and NLIWLDLNSNNLTGNLPGELASQ. Asn-96 and Asn-112 each carry an N-linked (GlcNAc...) asparagine glycan. Asn-156 is a glycosylation site (N-linked (GlcNAc...) asparagine). Residues Asn-212, Asn-227, and Asn-257 are each glycosylated (N-linked (GlcNAc...) asparagine). N-linked (GlcNAc...) asparagine glycans are attached at residues Asn-362 and Asn-373. An N-linked (GlcNAc...) asparagine glycan is attached at Asn-461. 3 N-linked (GlcNAc...) asparagine glycosylation sites follow: Asn-532, Asn-558, and Asn-638. 4 LRR repeats span residues 640-662, 664-686, 688-711, and 712-734; these read SMIYLDLSYNAVSGSIPLGYGAM, YLQVLNLGHNLLTGTIPDSFGGL, AIGVLDLSHNDLQGFLPGSLGGLS, and FLSDLDVSNNNLTGPIPFGGQLT. Asn-722 and Asn-743 each carry an N-linked (GlcNAc...) asparagine glycan. Positions 748-755 match the Cys pair 2 motif; the sequence is CGVPLPPC. A helical membrane pass occupies residues 773–793; the sequence is IATGMSAGIVFSFMCIVMLIM. Over 794–1164 the chain is Cytoplasmic; it reads ALYRARKVQK…LVEESRDKEP (371 aa). A phosphothreonine mark is found at Thr-847 and Thr-855. One can recognise a Protein kinase domain in the interval 858–1136; it reads FSADSMIGSG…QVMTMFKELV (279 aa). ATP-binding positions include 864 to 872 and Lys-886; that span reads IGSGGFGDV. A Phosphotyrosine modification is found at Tyr-931. Asp-985 (proton acceptor) is an active-site residue. Ser-1020 is modified (phosphoserine). Tyr-1028 carries the phosphotyrosine modification.

The protein belongs to the protein kinase superfamily. Ser/Thr protein kinase family. Post-translationally, autophosphorylated on Tyr and Thr residues. In terms of tissue distribution, predominantly expressed in vascular tissues. Expressed only during postembryonic development with a very discrete pattern of expression, preferentially in the two protophloem cell files at the elongation zone of the root. The expression in these two cell files attenuates as the phloem cells differentiate in the upper root. In cotyledons and leaves, it is expressed in phloem cells, starting at the cotyledons and shoot apex, moving toward the basal part of the leaves, where the expression is weak. Expressed in the secondary and tertiary veins and in the upper part of the cotyledons and leaves. Weakly or not expressed in the inflorescence stems. Has some complementary expression with BRL1.

The protein localises to the cell membrane. It carries out the reaction L-seryl-[protein] + ATP = O-phospho-L-seryl-[protein] + ADP + H(+). The catalysed reaction is L-threonyl-[protein] + ATP = O-phospho-L-threonyl-[protein] + ADP + H(+). It catalyses the reaction L-tyrosyl-[protein] + ATP = O-phospho-L-tyrosyl-[protein] + ADP + H(+). In terms of biological role, receptor with a dual specificity kinase activity acting on both serine/threonine- and tyrosine-containing substrates. Binds brassinolide. Regulates, in response to brassinosteroid binding, a signaling cascade involved in plant development. May be involved in cell growth and vascular differentiation. This Arabidopsis thaliana (Mouse-ear cress) protein is Receptor-like protein kinase BRI1-like 3 (BRL3).